Reading from the N-terminus, the 410-residue chain is Aspartic proteinase Asp1 (410 aa).

The signal sequence occupies residues 1–23 (MTARLALLASLLLLLQLVPPSSA). A propeptide spans 24–46 (VVLELHGNVYPIGHFFITMNIGD) (removed in mature form). In terms of domain architecture, Peptidase A1 spans 38-392 (FFITMNIGDP…DSERSLLGWV (355 aa)). Catalysis depends on residues aspartate 56 and aspartate 257.

It belongs to the peptidase A1 family.

This chain is Aspartic proteinase Asp1 (ASP1), found in Oryza sativa subsp. japonica (Rice).